The sequence spans 109 residues: MITSEDIRERGVPDFKPGDTIRVEYRVVEGNRERTQAFEGLCIARRGSGISQTFVVRKNSFGVDVERIFPLHSPKIAGIKVISRGAPRRAKLYYIREKVGRKARVKKAR.

The protein belongs to the bacterial ribosomal protein bL19 family.

Its function is as follows. This protein is located at the 30S-50S ribosomal subunit interface and may play a role in the structure and function of the aminoacyl-tRNA binding site. The protein is Large ribosomal subunit protein bL19 of Rubrobacter xylanophilus (strain DSM 9941 / JCM 11954 / NBRC 16129 / PRD-1).